A 234-amino-acid chain; its full sequence is Cell polarity protein alp11 (234 aa).

A Ubiquitin-like domain is found at 4-88 (ITLFIKSSSA…IVVEDTRPPH (85 aa)). The region spanning 174 to 216 (VPEINNDNLWVGVEFDEPVGKNDGTVSGKRYFNAKNKHGSFLR) is the CAP-Gly domain. At Ser-213 the chain carries Phosphoserine.

This sequence belongs to the TBCB family. In terms of assembly, binds to monomeric alpha-tubulin. Interacts with alp21.

It localises to the cytoplasm. The protein resides in the cytoskeleton. Required for microtubule function and cell polarity. Involved in the proper folding of alpha-tubulin. This chain is Cell polarity protein alp11 (alp11), found in Schizosaccharomyces pombe (strain 972 / ATCC 24843) (Fission yeast).